The chain runs to 127 residues: Large ribosomal subunit protein eL8 (127 aa).

The protein belongs to the eukaryotic ribosomal protein eL8 family. As to quaternary structure, part of the 50S ribosomal subunit. Probably part of the RNase P complex.

Its subcellular location is the cytoplasm. In terms of biological role, multifunctional RNA-binding protein that recognizes the K-turn motif in ribosomal RNA, the RNA component of RNase P, box H/ACA, box C/D and box C'/D' sRNAs. The polypeptide is Large ribosomal subunit protein eL8 (Desulfurococcus amylolyticus (strain DSM 18924 / JCM 16383 / VKM B-2413 / 1221n) (Desulfurococcus kamchatkensis)).